Here is a 194-residue protein sequence, read N- to C-terminus: Small ribosomal subunit protein uS7 (194 aa).

Belongs to the universal ribosomal protein uS7 family. In terms of assembly, part of the 30S ribosomal subunit.

Its function is as follows. One of the primary rRNA binding proteins, it binds directly to 16S rRNA where it nucleates assembly of the head domain of the 30S subunit. Is located at the subunit interface close to the decoding center. The protein is Small ribosomal subunit protein uS7 of Methanococcus vannielii (strain ATCC 35089 / DSM 1224 / JCM 13029 / OCM 148 / SB).